The primary structure comprises 218 residues: Carboxylesterase 2 (218 aa).

Catalysis depends on charge relay system residues Ser-114, Asp-168, and His-199.

It belongs to the AB hydrolase superfamily. AB hydrolase 2 family. Homodimer.

It carries out the reaction a carboxylic ester + H2O = an alcohol + a carboxylate + H(+). Functionally, hydrolyzes carboxylic ester bonds with relatively broad substrate specificity. This Pseudomonas fluorescens protein is Carboxylesterase 2 (estB).